Reading from the N-terminus, the 251-residue chain is Octanoyltransferase (251 aa).

The 182-residue stretch at 49 to 230 (DEIPDQLLIL…ALDDALAGRL (182 aa)) folds into the BPL/LPL catalytic domain. Substrate-binding positions include 87 to 94 (RGGRITWH), 160 to 162 (AIG), and 173 to 175 (GVA). Cysteine 191 acts as the Acyl-thioester intermediate in catalysis.

This sequence belongs to the LipB family.

The protein resides in the cytoplasm. It catalyses the reaction octanoyl-[ACP] + L-lysyl-[protein] = N(6)-octanoyl-L-lysyl-[protein] + holo-[ACP] + H(+). Its pathway is protein modification; protein lipoylation via endogenous pathway; protein N(6)-(lipoyl)lysine from octanoyl-[acyl-carrier-protein]: step 1/2. In terms of biological role, catalyzes the transfer of endogenously produced octanoic acid from octanoyl-acyl-carrier-protein onto the lipoyl domains of lipoate-dependent enzymes. Lipoyl-ACP can also act as a substrate although octanoyl-ACP is likely to be the physiological substrate. This is Octanoyltransferase from Corynebacterium glutamicum (strain R).